Reading from the N-terminus, the 385-residue chain is Protein GOLM2 (385 aa).

At 1 to 12 (MVGFGAPRRTGR) the chain is on the cytoplasmic side. A helical; Signal-anchor for type II membrane protein membrane pass occupies residues 13-33 (LPPFVLVALLAVIGLLAFNYW). Over 34–385 (SVSARQAALH…YHKDHLNETL (352 aa)) the chain is Lumenal. The stretch at 44–193 (DELLGLQAQV…KEELDKQPQK (150 aa)) forms a coiled coil. A disordered region spans residues 169–385 (LAERKREYEE…YHKDHLNETL (217 aa)). 2 stretches are compositionally biased toward basic and acidic residues: residues 170–193 (AERKREYEENLTKQKEELDKQPQK) and 211–220 (EVKEKIEDPS). Over residues 265–283 (LPSQSKSLLEKQPSLQPLS) the composition is skewed to polar residues. Over residues 285–299 (TEHEVKKPLPDKKET) the composition is skewed to basic and acidic residues. Over residues 356-367 (NGDDGNVEDDDH) the composition is skewed to acidic residues. The segment covering 368-385 (DGQADAGEYHKDHLNETL) has biased composition (basic and acidic residues).

The protein belongs to the GOLM family.

Its subcellular location is the membrane. The polypeptide is Protein GOLM2 (golm2) (Xenopus laevis (African clawed frog)).